Reading from the N-terminus, the 317-residue chain is Periplasmic [NiFe] hydrogenase small subunit 1 (317 aa).

Residues 1-49 (MRFSVGLGKEGAEERLARRGVSRRDFLKFCTAIAVTMGMGPAFAPEVAR) constitute a signal peptide (tat-type signal). The [4Fe-4S] cluster site is built by C67, C70, C164, C200, H238, C241, C266, and C272. [3Fe-4S] cluster is bound by residues C281, C299, and C302.

This sequence belongs to the [NiFe]/[NiFeSe] hydrogenase small subunit family. As to quaternary structure, heterodimer of a large and a small subunit. Requires [3Fe-4S] cluster as cofactor. [4Fe-4S] cluster is required as a cofactor. In terms of processing, predicted to be exported by the Tat system. The position of the signal peptide cleavage has not been experimentally proven.

It is found in the periplasm. It catalyses the reaction 2 Fe(III)-[cytochrome c3] + H2 = 2 Fe(II)-[cytochrome c3] + 2 H(+). This Nitratidesulfovibrio vulgaris (strain ATCC 29579 / DSM 644 / CCUG 34227 / NCIMB 8303 / VKM B-1760 / Hildenborough) (Desulfovibrio vulgaris) protein is Periplasmic [NiFe] hydrogenase small subunit 1 (hynB1).